The sequence spans 387 residues: MTVSELNEQAKSLLESHFPSIEVVGEISRFTRQPTSGHWYFTLKDEKASISCAMFKSTALRVKFIPKDGLKVIITGKVSIYSPTGNYQIIAASMKLAGEGELEAKFSALKQKLSDEGLFAEEYKKPLPKFPQKIAFLTSLSSAAYQDMLRVARDRFALVKIDAYSVFVQGENTASSVISALKTADKKDYDCIIIARGGGSKEDLWGFNDENLARAIFAAHTPVISAIGHEIDFSISDFVADHRSLTPTAAMMDLLPDVNTLLQDLSGADNFLINFINSCFKKCENALNVANLSLKTKSVDSKILKFENDLREGESKLENFIKFRLSNFENRLNLNTQILKSKAKFFEITKNLVSISKDGKIVKLKDLKSGDNFEISSQEISKQAKIL.

Belongs to the XseA family. In terms of assembly, heterooligomer composed of large and small subunits.

The protein resides in the cytoplasm. It catalyses the reaction Exonucleolytic cleavage in either 5'- to 3'- or 3'- to 5'-direction to yield nucleoside 5'-phosphates.. Functionally, bidirectionally degrades single-stranded DNA into large acid-insoluble oligonucleotides, which are then degraded further into small acid-soluble oligonucleotides. The sequence is that of Exodeoxyribonuclease 7 large subunit from Campylobacter hominis (strain ATCC BAA-381 / DSM 21671 / CCUG 45161 / LMG 19568 / NCTC 13146 / CH001A).